We begin with the raw amino-acid sequence, 804 residues long: Elongation factor G, mitochondrial (804 aa).

Residues 1–9 (MVRPAQVRA) constitute a mitochondrion transit peptide. The tr-type G domain maps to 103-389 (SKVRNIGIAA…GVCDYLPNPS (287 aa)). Residues 112–119 (AHIDSGKT), 187–191 (DTPGH), and 241–244 (NKMD) contribute to the GTP site.

Belongs to the TRAFAC class translation factor GTPase superfamily. Classic translation factor GTPase family. EF-G/EF-2 subfamily.

The protein localises to the mitochondrion. It functions in the pathway protein biosynthesis; polypeptide chain elongation. In terms of biological role, mitochondrial GTPase that catalyzes the GTP-dependent ribosomal translocation step during translation elongation. During this step, the ribosome changes from the pre-translocational (PRE) to the post-translocational (POST) state as the newly formed A-site-bound peptidyl-tRNA and P-site-bound deacylated tRNA move to the P and E sites, respectively. Catalyzes the coordinated movement of the two tRNA molecules, the mRNA and conformational changes in the ribosome. This Talaromyces stipitatus (strain ATCC 10500 / CBS 375.48 / QM 6759 / NRRL 1006) (Penicillium stipitatum) protein is Elongation factor G, mitochondrial (mef1).